The following is a 155-amino-acid chain: Endoribonuclease YbeY (155 aa).

3 residues coordinate Zn(2+): histidine 114, histidine 118, and histidine 124.

The protein belongs to the endoribonuclease YbeY family. The cofactor is Zn(2+).

It is found in the cytoplasm. Single strand-specific metallo-endoribonuclease involved in late-stage 70S ribosome quality control and in maturation of the 3' terminus of the 16S rRNA. The sequence is that of Endoribonuclease YbeY from Buchnera aphidicola subsp. Acyrthosiphon pisum (strain APS) (Acyrthosiphon pisum symbiotic bacterium).